A 227-amino-acid polypeptide reads, in one-letter code: Cytochrome c oxidase subunit 2 (227 aa).

The Mitochondrial intermembrane portion of the chain corresponds to 1–26 (MNTWMNFNLQNSNSPLMEQLMFFHNH). The helical transmembrane segment at 27 to 48 (SMLIILLITILVGYIMSSLLYN) threads the bilayer. Over 49 to 62 (KLYNRYLLESQNVE) the chain is Mitochondrial matrix. Residues 63 to 82 (IIWTILPAFMLIFIALPSLR) traverse the membrane as a helical segment. The Mitochondrial intermembrane portion of the chain corresponds to 83–227 (LLYLLDDSNS…SFIKWISSNS (145 aa)). Residues His161, Cys196, Glu198, Cys200, His204, and Met207 each coordinate Cu cation. Residue Glu198 participates in Mg(2+) binding.

The protein belongs to the cytochrome c oxidase subunit 2 family. In terms of assembly, component of the cytochrome c oxidase (complex IV, CIV), a multisubunit enzyme composed of a catalytic core of 3 subunits and several supernumerary subunits. The complex exists as a monomer or a dimer and forms supercomplexes (SCs) in the inner mitochondrial membrane with ubiquinol-cytochrome c oxidoreductase (cytochrome b-c1 complex, complex III, CIII). Requires Cu cation as cofactor.

The protein localises to the mitochondrion inner membrane. It carries out the reaction 4 Fe(II)-[cytochrome c] + O2 + 8 H(+)(in) = 4 Fe(III)-[cytochrome c] + 2 H2O + 4 H(+)(out). Component of the cytochrome c oxidase, the last enzyme in the mitochondrial electron transport chain which drives oxidative phosphorylation. The respiratory chain contains 3 multisubunit complexes succinate dehydrogenase (complex II, CII), ubiquinol-cytochrome c oxidoreductase (cytochrome b-c1 complex, complex III, CIII) and cytochrome c oxidase (complex IV, CIV), that cooperate to transfer electrons derived from NADH and succinate to molecular oxygen, creating an electrochemical gradient over the inner membrane that drives transmembrane transport and the ATP synthase. Cytochrome c oxidase is the component of the respiratory chain that catalyzes the reduction of oxygen to water. Electrons originating from reduced cytochrome c in the intermembrane space (IMS) are transferred via the dinuclear copper A center (CU(A)) of subunit 2 and heme A of subunit 1 to the active site in subunit 1, a binuclear center (BNC) formed by heme A3 and copper B (CU(B)). The BNC reduces molecular oxygen to 2 water molecules using 4 electrons from cytochrome c in the IMS and 4 protons from the mitochondrial matrix. This Ctenocephalides felis (Cat flea) protein is Cytochrome c oxidase subunit 2 (COII).